Reading from the N-terminus, the 458-residue chain is MNTSYSQSNLRHNQILIWLCILSFFSVLNEMVLNVSLPDIANDFNKPPASTNWVNTAFMLTFSIGTAVYGKLSDQLGIKRLLLFGIIINCFGSVIGFVGHSFFSLLIMARFIQGAGAAAFPALVMVVVARYIPKENRGKAFGLIGSIVAMGEGVGPAIVGMIAHYIHWSYLLLIPMITIITVPFLMKLLKKEVRIKGHFDIKGIILMSVGIVFFMLFTTSYSISFLIVSVLSFLIFVKHIRKVTDPFVDPGLGKNILFMIGVLCGGIIFGTVAGFVSMVPYMMKDVHQLSTAEIGSVIIFPGTMSVIIFGYIGGILVDRRGPLYVLNIGVTFLSVSFLTAFFLLETTSWFMTIIIVFVLGGLSFTKTVIPTIVSSSLKQQEAGAGMSLLNFTSFLSEGTGIAIVGGLLSIPLLDQRLLPMGVDQSTYLYSNLLLLFSGIIVISGLVTVNVYKHSQRDF.

12 helical membrane passes run 12 to 33 (HNQILIWLCILSFFSVLNEMVL), 81 to 100 (LLLFGIIINCFGSVIGFVGH), 111 to 129 (FIQGAGAAAFPALVMVVVA), 140 to 162 (AFGLIGSIVAMGEGVGPAIVGMI), 165 to 185 (YIHWSYLLLIPMITIITVPFL), 201 to 221 (IKGIILMSVGIVFFMLFTTSY), 223 to 240 (ISFLIVSVLSFLIFVKHI), 256 to 276 (ILFMIGVLCGGIIFGTVAGFV), 297 to 317 (VIIFPGTMSVIIFGYIGGILV), 324 to 344 (YVLNIGVTFLSVSFLTAFFLL), 346 to 365 (TTSWFMTIIIVFVLGGLSFT), and 432 to 451 (LLLLFSGIIVISGLVTVNVY).

Belongs to the major facilitator superfamily. TCR/Tet family.

Its subcellular location is the cell membrane. Functionally, resistance to tetracycline by an active tetracycline efflux. This is an energy-dependent process that decreases the accumulation of the antibiotic in whole cells. This protein functions as a metal-tetracycline/H(+) antiporter. This chain is Tetracycline resistance protein (tet), found in Streptococcus agalactiae.